We begin with the raw amino-acid sequence, 604 residues long: uncharacterized protein (604 aa).

Belongs to the glycosyltransferase 2 family.

This is an uncharacterized protein from Rickettsia conorii (strain ATCC VR-613 / Malish 7).